The chain runs to 1598 residues: Pentafunctional AROM polypeptide (1598 aa).

The interval 1-384 (MGVPTKISIL…YEPRACTVSN (384 aa)) is 3-dehydroquinate synthase. NAD(+) contacts are provided by residues 44–46 (DTN), 81–84 (ESSK), 114–116 (GGV), and Asp-119. Arg-130 serves as a coordination point for 7-phospho-2-dehydro-3-deoxy-D-arabino-heptonate. 139–140 (TT) serves as a coordination point for NAD(+). The 7-phospho-2-dehydro-3-deoxy-D-arabino-heptonate site is built by Asp-146 and Lys-152. Lys-161 lines the NAD(+) pocket. A 7-phospho-2-dehydro-3-deoxy-D-arabino-heptonate-binding site is contributed by Asn-162. NAD(+)-binding positions include 179–182 (FLNT) and Asn-190. Glu-194 provides a ligand contact to Zn(2+). Residues 194-197 (EVIK) and Lys-250 each bind 7-phospho-2-dehydro-3-deoxy-D-arabino-heptonate. Catalysis depends on Glu-260, which acts as the Proton acceptor; for 3-dehydroquinate synthase activity. Residues 264 to 268 (RNLLN) and His-271 each bind 7-phospho-2-dehydro-3-deoxy-D-arabino-heptonate. Position 271 (His-271) interacts with Zn(2+). Catalysis depends on His-275, which acts as the Proton acceptor; for 3-dehydroquinate synthase activity. The 7-phospho-2-dehydro-3-deoxy-D-arabino-heptonate site is built by His-287 and Lys-356. His-287 contacts Zn(2+). Residues 397–842 (VYPGFPKSLN…WDTLAQTFKV (446 aa)) are EPSP synthase. Residue Cys-824 is the For EPSP synthase activity of the active site. Residues 867-1059 (AASIFIIGMR…RRKENTFFVS (193 aa)) form a shikimate kinase region. 874–881 (GMRGAGKT) is a binding site for ATP. Positions 1060-1280 (LTFPDLTPAS…AAPGQLSARE (221 aa)) are 3-dehydroquinase. His-1183 functions as the Proton acceptor; for 3-dehydroquinate dehydratase activity in the catalytic mechanism. The active-site Schiff-base intermediate with substrate; for 3-dehydroquinate dehydratase activity is the Lys-1211. The shikimate dehydrogenase stretch occupies residues 1293–1598 (AKKFAVIGKP…GVSSSDDIIS (306 aa)).

This sequence in the N-terminal section; belongs to the sugar phosphate cyclases superfamily. Dehydroquinate synthase family. In the 2nd section; belongs to the EPSP synthase family. It in the 3rd section; belongs to the shikimate kinase family. The protein in the 4th section; belongs to the type-I 3-dehydroquinase family. This sequence in the C-terminal section; belongs to the shikimate dehydrogenase family. Homodimer. Requires Zn(2+) as cofactor.

The protein localises to the cytoplasm. It carries out the reaction 7-phospho-2-dehydro-3-deoxy-D-arabino-heptonate = 3-dehydroquinate + phosphate. The enzyme catalyses 3-dehydroquinate = 3-dehydroshikimate + H2O. The catalysed reaction is shikimate + NADP(+) = 3-dehydroshikimate + NADPH + H(+). It catalyses the reaction shikimate + ATP = 3-phosphoshikimate + ADP + H(+). It carries out the reaction 3-phosphoshikimate + phosphoenolpyruvate = 5-O-(1-carboxyvinyl)-3-phosphoshikimate + phosphate. The protein operates within metabolic intermediate biosynthesis; chorismate biosynthesis; chorismate from D-erythrose 4-phosphate and phosphoenolpyruvate: step 2/7. Its pathway is metabolic intermediate biosynthesis; chorismate biosynthesis; chorismate from D-erythrose 4-phosphate and phosphoenolpyruvate: step 3/7. It functions in the pathway metabolic intermediate biosynthesis; chorismate biosynthesis; chorismate from D-erythrose 4-phosphate and phosphoenolpyruvate: step 4/7. It participates in metabolic intermediate biosynthesis; chorismate biosynthesis; chorismate from D-erythrose 4-phosphate and phosphoenolpyruvate: step 5/7. The protein operates within metabolic intermediate biosynthesis; chorismate biosynthesis; chorismate from D-erythrose 4-phosphate and phosphoenolpyruvate: step 6/7. Functionally, the AROM polypeptide catalyzes 5 consecutive enzymatic reactions in prechorismate polyaromatic amino acid biosynthesis. This chain is Pentafunctional AROM polypeptide, found in Paracoccidioides lutzii (strain ATCC MYA-826 / Pb01) (Paracoccidioides brasiliensis).